The chain runs to 483 residues: Cobyric acid synthase (483 aa).

The region spanning 244 to 430 (WLRVIAPVLP…LHGLFDHAEA (187 aa)) is the GATase cobBQ-type domain. Cys-325 acts as the Nucleophile in catalysis. His-422 is a catalytic residue.

Belongs to the CobB/CobQ family. CobQ subfamily.

The protein operates within cofactor biosynthesis; adenosylcobalamin biosynthesis. Functionally, catalyzes amidations at positions B, D, E, and G on adenosylcobyrinic A,C-diamide. NH(2) groups are provided by glutamine, and one molecule of ATP is hydrogenolyzed for each amidation. The protein is Cobyric acid synthase of Methylobacillus flagellatus (strain ATCC 51484 / DSM 6875 / VKM B-1610 / KT).